The chain runs to 467 residues: Retinoic acid receptor RXR-alpha (467 aa).

Residues 1–61 (MDTKHFLPLD…LHSPISTLSS (61 aa)) form a disordered region. The tract at residues 1-139 (MDTKHFLPLD…GNMSSFTKHI (139 aa)) is modulating. Lysine 4 is covalently cross-linked (Glycyl lysine isopeptide (Lys-Gly) (interchain with G-Cter in SUMO2)). Phosphoserine occurs at positions 22 and 28. Positions 32 to 55 (PSLHPSLGPGLGSPLGSPGQLHSP) are enriched in low complexity. A phosphoserine; by MAPK8 and MAPK9 mark is found at serine 61 and serine 75. The interval 79 to 109 (PHSMSVPTTPTLGFETGSPQLNSPMNPVSSS) is disordered. Residues 83–109 (SVPTTPTLGFETGSPQLNSPMNPVSSS) show a composition bias toward polar residues. Phosphothreonine; by MAPK8 and MAPK9 is present on threonine 87. Lysine 113 participates in a covalent cross-link: Glycyl lysine isopeptide (Lys-Gly) (interchain with G-Cter in SUMO). Phosphoserine is present on serine 134. Zn(2+)-binding residues include cysteine 140 and cysteine 143. The NR C4-type zinc finger occupies 140-160 (CAICGDRSSGKHYGVYSCEGC). The nuclear receptor DNA-binding region spans 140–205 (CAICGDRSSG…RYQKCLAMGM (66 aa)). N6-acetyllysine is present on lysine 150. Cysteine 157 and cysteine 160 together coordinate Zn(2+). The tract at residues 165-170 (KRTVRK) is nuclear localization signal. Zn(2+) is bound by residues cysteine 176, cysteine 182, cysteine 192, and cysteine 195. The segment at 176 to 200 (CRDNKDCLIDKRQRNRCQYCRYQKC) adopts an NR C4-type zinc-finger fold. The segment at 206 to 229 (KREAVQEERQRGKDRNENEVESTS) is hinge. Residues 211–223 (QEERQRGKDRNEN) show a composition bias toward basic and acidic residues. A disordered region spans residues 211–233 (QEERQRGKDRNENEVESTSSANE). The NR LBD domain maps to 232-463 (NEDMPVEKIL…TFLMEMLEAP (232 aa)). Serine 264 carries the phosphoserine modification. Phosphoserine; by MAPK8 and MAPK9 is present on serine 265. The 9-cis-retinoate site is built by arginine 321 and alanine 332. All-trans-retinoate-binding residues include arginine 321 and alanine 332. A required for nuclear export region spans residues 353-373 (RVLTELVSKMRDMQMDKTELG).

It belongs to the nuclear hormone receptor family. NR2 subfamily. Homodimer. Heterodimer (via C-terminus) with RARA; required for ligand-dependent retinoic acid receptor transcriptional activity; association with RARA is enhanced by pulsatile shear stress. Heterodimer with PPARA (via the leucine-like zipper in the LBD); the interaction is required for PPARA transcriptional activity. Heterodimerizes with PPARG. Heterodimerizes (via NR LBD) with RARB. Heterodimerizes with NR1H4; the heterodimerization enhances the binding affinity for LXXLL motifs from coactivators. Interacts with NCOA3 and NCOA6 coactivators. Interacts with FAM120B. Interacts with coactivator PELP1, SENP6, SFPQ, DNTTIP2 and RNF8. Interacts with PRMT2. Interacts with ASXL1. Interacts with BHLHE40/DEC1, BHLHE41/DEC2, MED1, NCOR1 and NCOR2. Interacts in a ligand-dependent fashion with MED1 and NCOA1. Interacts with VDR. Interacts with EP300; the interaction is decreased by 9-cis retinoic acid. Heterodimer (via C-terminus) with NR4A1 (DNA-binding domain); the interaction is enhanced by 9-cis retinoic acid. NR4A1 competes with EP300 for interaction with RXRA and thereby attenuates EP300 mediated acetylation of RXRA. In the absence of hormonal ligand, interacts with TACC1. Interacts ith IGFBP3. Post-translationally, phosphorylated on serine and threonine residues mainly in the N-terminal modulating domain. Constitutively phosphorylated on Ser-22 in the presence or absence of ligand. Under stress conditions, hyperphosphorylated by activated JNK on Ser-61, Ser-75, Thr-87 and Ser-265. Phosphorylated on Ser-28, in vitro, by PKA. This phosphorylation is required for repression of cAMP-mediated transcriptional activity of RARA. In terms of processing, ubiquitinated by UBR5, leading to its degradation: UBR5 specifically recognizes and binds ligand-bound RXRA when it is not associated with coactivators (NCOAs). In presence of NCOAs, the UBR5-degron is not accessible, preventing its ubiquitination and degradation. Sumoylation negatively regulates transcriptional activity. Desumoylated specifically by SENP6. Post-translationally, acetylated by EP300; acetylation enhances DNA binding and transcriptional activity. Expressed in the adrenal gland with main expression in the zona fasciculata and medulla (at protein level). Expressed in aortic endothelial cells, with high expression in the descending thoracic aorta and the outer curvature of the aortic arch, where pulsatory shear stress exists, but very low in the inner curvature of the aortic arch, where oscillatory shear stress prevails (at protein level).

It is found in the nucleus. Its subcellular location is the cytoplasm. The protein resides in the mitochondrion. In terms of biological role, receptor for retinoic acid that acts as a transcription factor. Forms homo- or heterodimers with retinoic acid receptors (RARs) and binds to target response elements in response to their ligands, all-trans or 9-cis retinoic acid, to regulate gene expression in various biological processes. The RAR/RXR heterodimers bind to the retinoic acid response elements (RARE) composed of tandem 5'-AGGTCA-3' sites known as DR1-DR5 to regulate transcription. The high affinity ligand for retinoid X receptors (RXRs) is 9-cis retinoic acid. In the absence of ligand, the RXR-RAR heterodimers associate with a multiprotein complex containing transcription corepressors that induce histone deacetylation, chromatin condensation and transcriptional suppression. On ligand binding, the corepressors dissociate from the receptors and coactivators are recruited leading to transcriptional activation. Serves as a common heterodimeric partner for a number of nuclear receptors, such as RARA, RARB and PPARA. The RXRA/RARB heterodimer can act as a transcriptional repressor or transcriptional activator, depending on the RARE DNA element context. The RXRA/PPARA heterodimer is required for PPARA transcriptional activity on fatty acid oxidation genes such as ACOX1 and the P450 system genes. Together with RARA, positively regulates microRNA-10a expression, thereby inhibiting the GATA6/VCAM1 signaling response to pulsatile shear stress in vascular endothelial cells. Acts as an enhancer of RARA binding to RARE DNA element. May facilitate the nuclear import of heterodimerization partners such as VDR and NR4A1. Promotes myelin debris phagocytosis and remyelination by macrophages. Plays a role in the attenuation of the innate immune system in response to viral infections, possibly by negatively regulating the transcription of antiviral genes such as type I IFN genes. Involved in the regulation of calcium signaling by repressing ITPR2 gene expression, thereby controlling cellular senescence. The polypeptide is Retinoic acid receptor RXR-alpha (Rxra) (Rattus norvegicus (Rat)).